A 174-amino-acid polypeptide reads, in one-letter code: MDNGIFIVATIFVVNILYVTIYTVRLLLTMKGYRYLAALSSVFEMIIYVVALSLVLDNLNNIANVLAYAIGFGVGIIVGMKIEERIALGYITVNVITKEYNLDLPNQIRDLGYGVTSWLASGRDGERMMLEILTQRKNERKLYKHIIEIDSGAFIVSSEPKQIHGGFWVKQVRK.

Helical transmembrane passes span glycine 4–valine 24, leucine 36–leucine 56, and isoleucine 62–isoleucine 82.

It belongs to the UPF0316 family.

It is found in the cell membrane. This Listeria monocytogenes serotype 4a (strain HCC23) protein is UPF0316 protein LMHCC_0787.